A 130-amino-acid chain; its full sequence is MKIPADLYYSPSHEWVRVEGDQAWIGISDYAQHELGDIVFVEMPEPDDELEAGGQLGVIESVKAASTIYSPVGGTVVAINEELEDAPQLINEDPYANYIVVVAMNNPGDLDNLLSAAAYEELCQKEQGGE.

A Lipoyl-binding domain is found at 22–103 (QAWIGISDYA…PYANYIVVVA (82 aa)). Position 63 is an N6-lipoyllysine (Lys-63).

This sequence belongs to the GcvH family. As to quaternary structure, the glycine cleavage system is composed of four proteins: P, T, L and H. (R)-lipoate is required as a cofactor.

Functionally, the glycine cleavage system catalyzes the degradation of glycine. The H protein shuttles the methylamine group of glycine from the P protein to the T protein. This Syntrophomonas wolfei subsp. wolfei (strain DSM 2245B / Goettingen) protein is Glycine cleavage system H protein.